We begin with the raw amino-acid sequence, 256 residues long: 5-keto-4-deoxy-D-glucarate aldolase (256 aa).

Residue histidine 50 is the Proton acceptor of the active site. Glutamine 151 provides a ligand contact to substrate. Glutamate 153 contributes to the Mg(2+) binding site. 2 residues coordinate substrate: serine 178 and aspartate 179. Aspartate 179 is a Mg(2+) binding site.

Belongs to the HpcH/HpaI aldolase family. KDGluc aldolase subfamily. As to quaternary structure, homohexamer; trimer of dimers. Requires Mg(2+) as cofactor.

The enzyme catalyses 5-dehydro-4-deoxy-D-glucarate = 2-hydroxy-3-oxopropanoate + pyruvate. It catalyses the reaction 2-dehydro-3-deoxy-D-glucarate = 2-hydroxy-3-oxopropanoate + pyruvate. It participates in carbohydrate acid metabolism; galactarate degradation; D-glycerate from galactarate: step 2/3. Catalyzes the reversible retro-aldol cleavage of both 5-keto-4-deoxy-D-glucarate and 2-keto-3-deoxy-D-glucarate to pyruvate and tartronic semialdehyde. The sequence is that of 5-keto-4-deoxy-D-glucarate aldolase from Escherichia coli (strain ATCC 8739 / DSM 1576 / NBRC 3972 / NCIMB 8545 / WDCM 00012 / Crooks).